A 153-amino-acid polypeptide reads, in one-letter code: Ribosomal RNA large subunit methyltransferase H (153 aa).

Residues Leu70, Gly102, and 121–126 (LSRMTF) each bind S-adenosyl-L-methionine.

It belongs to the RNA methyltransferase RlmH family. As to quaternary structure, homodimer.

The protein resides in the cytoplasm. The catalysed reaction is pseudouridine(1915) in 23S rRNA + S-adenosyl-L-methionine = N(3)-methylpseudouridine(1915) in 23S rRNA + S-adenosyl-L-homocysteine + H(+). Its function is as follows. Specifically methylates the pseudouridine at position 1915 (m3Psi1915) in 23S rRNA. The polypeptide is Ribosomal RNA large subunit methyltransferase H (Geotalea uraniireducens (strain Rf4) (Geobacter uraniireducens)).